Here is a 507-residue protein sequence, read N- to C-terminus: ATP synthase subunit alpha 2 (507 aa).

171 to 178 (GDRATGKT) contributes to the ATP binding site.

The protein belongs to the ATPase alpha/beta chains family. As to quaternary structure, F-type ATPases have 2 components, CF(1) - the catalytic core - and CF(0) - the membrane proton channel. CF(1) has five subunits: alpha(3), beta(3), gamma(1), delta(1), epsilon(1). CF(0) has three main subunits: a(1), b(2) and c(9-12). The alpha and beta chains form an alternating ring which encloses part of the gamma chain. CF(1) is attached to CF(0) by a central stalk formed by the gamma and epsilon chains, while a peripheral stalk is formed by the delta and b chains.

The protein resides in the cell inner membrane. It catalyses the reaction ATP + H2O + 4 H(+)(in) = ADP + phosphate + 5 H(+)(out). In terms of biological role, produces ATP from ADP in the presence of a proton gradient across the membrane. The alpha chain is a regulatory subunit. The chain is ATP synthase subunit alpha 2 from Gluconobacter oxydans (strain 621H) (Gluconobacter suboxydans).